Consider the following 441-residue polypeptide: tRNA(Ile)-lysidine synthase (441 aa).

Residue 27–32 participates in ATP binding; it reads SGGVDS.

It belongs to the tRNA(Ile)-lysidine synthase family.

It localises to the cytoplasm. It carries out the reaction cytidine(34) in tRNA(Ile2) + L-lysine + ATP = lysidine(34) in tRNA(Ile2) + AMP + diphosphate + H(+). In terms of biological role, ligates lysine onto the cytidine present at position 34 of the AUA codon-specific tRNA(Ile) that contains the anticodon CAU, in an ATP-dependent manner. Cytidine is converted to lysidine, thus changing the amino acid specificity of the tRNA from methionine to isoleucine. The polypeptide is tRNA(Ile)-lysidine synthase (Proteus mirabilis (strain HI4320)).